The primary structure comprises 215 residues: Probable glutathione S-transferase GSTF2 (215 aa).

In terms of domain architecture, GST N-terminal spans 2–83 (APMKLYGSTL…YVCRKNKPEL (82 aa)). Residues serine 12, 41–42 (HK), 54–55 (QV), and 67–68 (ES) contribute to the glutathione site. The 128-residue stretch at 88-215 (DLKESAMVDV…KVASLMKPPA (128 aa)) folds into the GST C-terminal domain.

Belongs to the GST superfamily. Phi family. In terms of tissue distribution, constitutively expressed in roots. Expressed in anthers, callus, panicles, sheaths and stems (at protein level).

It carries out the reaction RX + glutathione = an S-substituted glutathione + a halide anion + H(+). Functionally, conjugation of reduced glutathione to a wide number of exogenous and endogenous hydrophobic electrophiles. The chain is Probable glutathione S-transferase GSTF2 (GSTF2) from Oryza sativa subsp. japonica (Rice).